A 312-amino-acid polypeptide reads, in one-letter code: Probable myosin light chain kinase DDB_G0282429 (312 aa).

The segment at 1–28 (MDRMDSSDEEIDNISDDELQSGDEIEVE) is disordered. The segment covering 7–27 (SDEEIDNISDDELQSGDEIEV) has biased composition (acidic residues). A Protein kinase domain is found at 38-290 (YILGNEIGRG…FEQCLIHPWV (253 aa)). Residues 44–52 (IGRGAFSIV) and K67 each bind ATP. Catalysis depends on D158, which acts as the Proton acceptor.

Belongs to the protein kinase superfamily. CAMK Ser/Thr protein kinase family. CaMK subfamily.

The catalysed reaction is L-seryl-[myosin light chain] + ATP = O-phospho-L-seryl-[myosin light chain] + ADP + H(+). The enzyme catalyses L-threonyl-[myosin light chain] + ATP = O-phospho-L-threonyl-[myosin light chain] + ADP + H(+). Its activity is regulated as follows. Does not have a calmodulin-binding domain. Its function is as follows. May phosphorylate a specific serine in the N-terminus of a myosin light chain. The sequence is that of Probable myosin light chain kinase DDB_G0282429 from Dictyostelium discoideum (Social amoeba).